Here is a 589-residue protein sequence, read N- to C-terminus: Serine/threonine-protein phosphatase 2A 65 kDa regulatory subunit A alpha isoform (589 aa).

The residue at position 2 (alanine 2) is an N-acetylalanine. HEAT repeat units follow at residues 8–46 (DSLY…GVER), 47–84 (TRSE…GGPE), 85–123 (YVHC…SPSD), 124–161 (LEAH…VSSA), 162–200 (VKAE…ELDN), 201–239 (VKSE…PQED), 240–278 (LEAL…GPEI), 279–321 (TKTD…RENV), 322–360 (IMTQ…GKDS), 361–399 (TIEH…GIRQ), 400–438 (LSQS…GVEF), 439–477 (FDEK…GKEW), 478–516 (AHAT…GQDI), 517–555 (TTKH…DNST), and 556–589 (LQSE…LSLA). Residues 8 to 399 (DSLYPIAVLI…CVNEVIGIRQ (392 aa)) form a PP2A subunit B binding region. The tract at residues 47 to 321 (TRSELLPFLT…NLSADCRENV (275 aa)) is polyoma small and medium T antigens Binding. The SV40 small T antigen binding stretch occupies residues 85–239 (YVHCLLPPLE…NIAQLLPQED (155 aa)). Lysine 280 carries the post-translational modification N6-acetyllysine. Residues 400 to 589 (LSQSLLPAIV…QEALTVLSLA (190 aa)) form a PP2A subunit C binding region.

This sequence belongs to the phosphatase 2A regulatory subunit A family. In terms of assembly, PP2A consists of a common heterodimeric core enzyme, composed of PPP2CA a 36 kDa catalytic subunit (subunit C) and PPP2R1A a 65 kDa constant regulatory subunit (PR65 or subunit A), that associates with a variety of regulatory subunits. Proteins that associate with the core dimer include three families of regulatory subunits B (the R2/B/PR55/B55, R3/B''/PR72/PR130/PR59 and R5/B'/B56 families), the 48 kDa variable regulatory subunit, viral proteins, and cell signaling molecules. Found in a complex with at least ARL2, PPP2CB, PPP2R1A, PPP2R2A, PPP2R5E and TBCD. Interacts with the PP2A C catalytic subunit PPP2CA. Interacts with the PP2A B subunit PPP2R2A. Interacts with the PP2A B subunit PPP2R5D. Interacts with FOXO1; the interaction dephosphorylates FOXO1 on AKT-mediated phosphorylation sites. Interacts with IPO9. Interacts with TP53 and SGO1. Interacts with PLA2G16; this interaction might decrease PP2A activity. Interacts with CTTNBP2NL. Interacts with GNA12; the interaction promotes protein phosphatase 2A activation causing dephosphorylation of MAPT. Interacts with CIP2A; this interaction stabilizes CIP2A. Interacts with PABIR1/FAM122A. Interacts with ADCY8; antagonizes interaction between ADCY8 and calmodulin. Interacts with CRTC3 (when phosphorylated at 'Ser-391'). Interacts with SPRY2. Part of the core of STRIPAK complexes composed of PP2A catalytic and scaffolding subunits, the striatins (PP2A regulatory subunits), the striatin-associated proteins MOB4, STRIP1 and STRIP2, PDCD10 and members of the STE20 kinases, such as STK24 and STK26. Component of the Integrator-PP2A (INTAC) complex, composed of the Integrator core complex and protein phosphatase 2A subunits PPP2CA and PPP2R1A.

It localises to the cytoplasm. Its subcellular location is the nucleus. The protein localises to the chromosome. It is found in the centromere. The protein resides in the lateral cell membrane. It localises to the cell projection. Its subcellular location is the dendrite. Its function is as follows. The PR65 subunit of protein phosphatase 2A serves as a scaffolding molecule to coordinate the assembly of the catalytic subunit and a variable regulatory B subunit. Upon interaction with GNA12 promotes dephosphorylation of microtubule associated protein TAU/MAPT. Required for proper chromosome segregation and for centromeric localization of SGO1 in mitosis. Together with RACK1 adapter, mediates dephosphorylation of AKT1 at 'Ser-473', preventing AKT1 activation and AKT-mTOR signaling pathway. Dephosphorylation of AKT1 is essential for regulatory T-cells (Treg) homeostasis and stability. Part of the striatin-interacting phosphatase and kinase (STRIPAK) complexes. STRIPAK complexes have critical roles in protein (de)phosphorylation and are regulators of multiple signaling pathways including Hippo, MAPK, nuclear receptor and cytoskeleton remodeling. Different types of STRIPAK complexes are involved in a variety of biological processes such as cell growth, differentiation, apoptosis, metabolism and immune regulation. Key mediator of a quality checkpoint during transcription elongation as part of the Integrator-PP2A (INTAC) complex. The INTAC complex drives premature transcription termination of transcripts that are unfavorably configured for transcriptional elongation: within the INTAC complex, acts as a scaffolding subunit for PPP2CA, which catalyzes dephosphorylation of the C-terminal domain (CTD) of Pol II subunit POLR2A/RPB1 and SUPT5H/SPT5, thereby preventing transcriptional elongation. Regulates the recruitment of the SKA complex to kinetochores. This chain is Serine/threonine-protein phosphatase 2A 65 kDa regulatory subunit A alpha isoform (PPP2R1A), found in Bos taurus (Bovine).